The chain runs to 56 residues: Sex-specific storage protein 1 (56 aa).

The protein belongs to the hemocyanin family. In terms of tissue distribution, expressed in fat body and ovary.

It localises to the secreted. Larval storage protein (LSP) which may serve as a store of amino acids for synthesis of adult proteins. The biosynthesis, accumulation and sequestration of storage protein-1 takes place during metamorphosis and saves energy for the non-feeding pupal stage. May also be essential for egg formation. This Amsacta albistriga (Red hairy caterpillar) protein is Sex-specific storage protein 1.